We begin with the raw amino-acid sequence, 520 residues long: Ribonuclease Y (520 aa).

At 1–3 the chain is on the extracellular side; the sequence is MTP. A helical membrane pass occupies residues 4–24; the sequence is IMMVLISILLILLGLVVGYFV. Residues 25 to 520 lie on the Cytoplasmic side of the membrane; it reads RKTIAEAKIA…RETRAVEYAK (496 aa). Positions 29–141 form a coiled coil; sequence AEAKIAGARG…KVDEMIRMQQ (113 aa). The KH domain occupies 210–273; the sequence is TVSVVNLPND…ETARIALDKL (64 aa). The HD domain occupies 336-429; that stretch reads VLKHSMEVAF…VAAADALSAA (94 aa).

Belongs to the RNase Y family. In terms of assembly, homodimer. Component of a possible RNA degradosome complex composed of rny, rnjA, rnjB, pnp, pfkA and eno (although rnjA and rnjB's presence is unclear). Interacts with RNA helicase CshA which may also be a member of the RNA degradosome complex. Interacts with full-length dynamin-like protein DynA. It depends on Mg(2+) as a cofactor. Mn(2+) is required as a cofactor. The cofactor is Zn(2+).

It localises to the cell membrane. Shows preference for transcripts carrying a monophosphate group at the 5' end. Functionally, endoribonuclease that initiates mRNA decay. Initiates the decay of all SAM-dependent riboswitches, such as yitJ riboswitch. Involved in processing of the gapA operon mRNA, it cleaves between cggR and gapA. Is also the decay-initiating endonuclease for rpsO mRNA. Involved in degradation of type I toxin-antitoxin system bsrG/SR4 RNAs and a minor role in degradation of type I toxin-antitoxin system bsrE/SR5 degradation. This is Ribonuclease Y (rny) from Bacillus subtilis (strain 168).